Here is a 476-residue protein sequence, read N- to C-terminus: Proline--tRNA ligase 2 (476 aa).

This sequence belongs to the class-II aminoacyl-tRNA synthetase family. ProS type 3 subfamily. In terms of assembly, homodimer.

The protein resides in the cytoplasm. The enzyme catalyses tRNA(Pro) + L-proline + ATP = L-prolyl-tRNA(Pro) + AMP + diphosphate. In terms of biological role, catalyzes the attachment of proline to tRNA(Pro) in a two-step reaction: proline is first activated by ATP to form Pro-AMP and then transferred to the acceptor end of tRNA(Pro). The polypeptide is Proline--tRNA ligase 2 (Bacillus cereus (strain ATCC 14579 / DSM 31 / CCUG 7414 / JCM 2152 / NBRC 15305 / NCIMB 9373 / NCTC 2599 / NRRL B-3711)).